We begin with the raw amino-acid sequence, 318 residues long: Protein W (318 aa).

Disordered stretches follow at residues 1–24 (MDQDALISKEDSEVEREASGGRES) and 38–318 (SEPT…KKGA). Residues 7–20 (ISKEDSEVEREASG) show a composition bias toward basic and acidic residues. Over residues 50 to 61 (LHNTINTLQRPG) the composition is skewed to polar residues. Basic and acidic residues-rich tracts occupy residues 99–110 (AEAHARNVDKQN) and 150–168 (GAEDENREMAANPDKRGED). Phosphoserine; by host is present on residues serine 249, serine 257, and serine 260.

The polypeptide is Protein W (P/V/C) (Sendai virus (strain Hamamatsu) (SeV)).